The primary structure comprises 460 residues: Orexin receptor type 2 (460 aa).

The Extracellular segment spans residues 1 to 54 (MSSTKLEDSLSRRNWSSASELNETQEPFLNPTDYDDEEFLRYLWREYLHPKEYE). 2 N-linked (GlcNAc...) asparagine glycosylation sites follow: Asn14 and Asn22. The interval 33–49 (DYDDEEFLRYLWREYLH) is required for response to orexin-A. A helical transmembrane segment spans residues 55-75 (WVLIAGYIIVFVVALIGNVLV). At 76 to 88 (CVAVWKNHHMRTV) the chain is on the cytoplasmic side. Residues 89-110 (TNYFIVNLSLADVLVTITCLPA) form a helical membrane-spanning segment. The Extracellular portion of the chain corresponds to 111-127 (TLVVDITETWFFGQSLC). A disulfide bond links Cys127 and Cys210. The helical transmembrane segment at 128 to 150 (KVIPYLQTVSVSVSVLTLSCIAL) threads the bilayer. The Cytoplasmic portion of the chain corresponds to 151-170 (DRWYAICHPLMFKSTAKRAR). The helical transmembrane segment at 171 to 191 (NSIVVIWIVSCIIMIPQAIVM) threads the bilayer. Residues 192 to 222 (ECSSMLPGLANKTTLFTVCDEHWGGEVYPKM) lie on the Extracellular side of the membrane. Asn202 carries an N-linked (GlcNAc...) asparagine glycan. Residues 223–243 (YHICFFLVTYMAPLCLMILAY) traverse the membrane as a helical segment. The Cytoplasmic portion of the chain corresponds to 244 to 304 (LQIFRKLWCR…QIRARRKTAR (61 aa)). Residues 305–326 (MLMVVLLVFAICYLPISILNVL) traverse the membrane as a helical segment. Residues 327–342 (KRVFGMFTHTEDRETV) are Extracellular-facing. The helical transmembrane segment at 343-366 (YAWFTFSHWLVYANSAANPIIYNF) threads the bilayer. Residues 367–460 (LSGKFREEFK…SSLLSTWLEV (94 aa)) lie on the Cytoplasmic side of the membrane.

Belongs to the G-protein coupled receptor 1 family. As to expression, widely expressed. Isoform 2 not detected in skeletal muscle and kidney.

The protein localises to the cell membrane. Its function is as follows. Nonselective, high-affinity receptor for both orexin-A and orexin-B neuropeptides. Triggers an increase in cytoplasmic Ca(2+) levels in response to orexin-A binding. The chain is Orexin receptor type 2 (Hcrtr2) from Mus musculus (Mouse).